The chain runs to 164 residues: 16S rRNA aminocarboxypropyltransferase (164 aa).

Residues Thr18, Ile66, Leu87, and Ser106 each coordinate S-adenosyl-L-methionine.

The protein belongs to the TDD superfamily. TSR3 family.

The protein localises to the cytoplasm. The catalysed reaction is an N(1)-methylpseudouridine in rRNA + S-adenosyl-L-methionine = N(1)-methyl-N(3)-[(3S)-3-amino-3-carboxypropyl]pseudouridine in rRNA + S-methyl-5'-thioadenosine + H(+). Its function is as follows. Aminocarboxypropyltransferase that catalyzes the aminocarboxypropyl transfer on pseudouridine corresponding to position 914 in M.jannaschii 16S rRNA. It constitutes the last step in biosynthesis of the hypermodified N1-methyl-N3-(3-amino-3-carboxypropyl) pseudouridine (m1acp3-Psi). This chain is 16S rRNA aminocarboxypropyltransferase, found in Thermoplasma volcanium (strain ATCC 51530 / DSM 4299 / JCM 9571 / NBRC 15438 / GSS1).